The primary structure comprises 272 residues: 3-methyl-2-oxobutanoate hydroxymethyltransferase (272 aa).

Positions 52 and 91 each coordinate Mg(2+). 3-methyl-2-oxobutanoate is bound by residues 52-53 (DS), aspartate 91, and lysine 121. Glutamate 123 is a Mg(2+) binding site. The Proton acceptor role is filled by glutamate 190.

The protein belongs to the PanB family. Homodecamer; pentamer of dimers. The cofactor is Mg(2+).

The protein localises to the cytoplasm. The catalysed reaction is 3-methyl-2-oxobutanoate + (6R)-5,10-methylene-5,6,7,8-tetrahydrofolate + H2O = 2-dehydropantoate + (6S)-5,6,7,8-tetrahydrofolate. It participates in cofactor biosynthesis; (R)-pantothenate biosynthesis; (R)-pantoate from 3-methyl-2-oxobutanoate: step 1/2. In terms of biological role, catalyzes the reversible reaction in which hydroxymethyl group from 5,10-methylenetetrahydrofolate is transferred onto alpha-ketoisovalerate to form ketopantoate. This chain is 3-methyl-2-oxobutanoate hydroxymethyltransferase, found in Flavobacterium johnsoniae (strain ATCC 17061 / DSM 2064 / JCM 8514 / BCRC 14874 / CCUG 350202 / NBRC 14942 / NCIMB 11054 / UW101) (Cytophaga johnsonae).